Here is a 352-residue protein sequence, read N- to C-terminus: Uroporphyrinogen decarboxylase (352 aa).

Residues 26–30, D76, Y153, S208, and H323 each bind substrate; that span reads RQAGR.

It belongs to the uroporphyrinogen decarboxylase family. In terms of assembly, homodimer.

It localises to the cytoplasm. It catalyses the reaction uroporphyrinogen III + 4 H(+) = coproporphyrinogen III + 4 CO2. It functions in the pathway porphyrin-containing compound metabolism; protoporphyrin-IX biosynthesis; coproporphyrinogen-III from 5-aminolevulinate: step 4/4. Catalyzes the decarboxylation of four acetate groups of uroporphyrinogen-III to yield coproporphyrinogen-III. This is Uroporphyrinogen decarboxylase from Synechococcus sp. (strain CC9605).